Reading from the N-terminus, the 344-residue chain is Fibronectin type 3 and ankyrin repeat domains 1 protein (344 aa).

The Fibronectin type-III domain occupies 11 to 108; it reads KPHPPVVGKV…VVSVATTREP (98 aa). ANK repeat units lie at residues 109 to 139, 143 to 172, 176 to 205, 209 to 238, 243 to 273, and 277 to 306; these read ISSE…MIDV, FGFT…DVNL, SGKD…SWEA, GGCT…EVDV, SGWT…DVNI, and DGKT…DATV.

In terms of assembly, interacts with COPS5; regulates the phosphorylation of JUN and the transcriptional activity of AP-1. Interacts with RYBP; may prevent the ubiquitin-mediated proteasomal degradation of FANK1. Polyubiquitinated. Polyubiquitination leads to proteasomal degradation. Mostly restricted to testis (at protein level), including mid to late pachytene spermatocytes (stages VI-X), diplotene spermatocytes (stage XI), meiotically dividing spermatocytes (stage XII) and spermatids in steps 1-14. Highest levels in late pachytene spermatocytes and spermatids in steps 1-9.

It localises to the nucleus. Its subcellular location is the cytoplasm. It is found in the cytosol. The protein resides in the cytoskeleton. The protein localises to the cilium basal body. It localises to the cell projection. Its subcellular location is the cilium. In terms of biological role, through the activation of JUN and AP-1-mediated transcription, may regulate apoptosis. The chain is Fibronectin type 3 and ankyrin repeat domains 1 protein from Mus musculus (Mouse).